We begin with the raw amino-acid sequence, 445 residues long: Mutanase Pc12g07500 (445 aa).

Residues 1-21 form the signal peptide; that stretch reads MIWKSLFSALAILTHILPALT. N-linked (GlcNAc...) asparagine glycosylation is found at asparagine 386 and asparagine 437.

Belongs to the glycosyl hydrolase 71 family. Monomer.

The protein resides in the secreted. The catalysed reaction is Endohydrolysis of (1-&gt;3)-alpha-D-glucosidic linkages in isolichenin, pseudonigeran and nigeran.. Its function is as follows. Hydrolyzes 1,3-alpha-glucan predominantly into pentasaccharides. May enhance the efficacy of fungal antibiotics by degrading bacterial exopolysaccharides. This is Mutanase Pc12g07500 from Penicillium rubens (strain ATCC 28089 / DSM 1075 / NRRL 1951 / Wisconsin 54-1255) (Penicillium chrysogenum).